The primary structure comprises 328 residues: Reticulocalbin-3 (328 aa).

A signal peptide spans 1–20; the sequence is MMWRWTLMLLLLLLRHWALG. Residues 24-48 are disordered; it reads PDAGPHGQDRVHHGTPLSEAPHDDA. 6 consecutive EF-hand domains span residues 75–112, 113–148, 163–198, 200–235, 241–276, and 277–312; these read ESQA…TQQR, HIRD…HYEP, KMLA…EEFP, MRDI…AEPG, WVQT…PSQD, and QPLV…FVGS. The Ca(2+) site is built by Asp92, Asp94, Trp96, Glu101, Asp126, Asp128, Asp130, Arg132, and Glu137. An N-linked (GlcNAc...) asparagine glycan is attached at Asn140. Ca(2+) is bound by residues Asp176, Asp178, Asp180, Met182, Glu187, Asp213, Asn215, Asp217, Tyr219, Glu224, Asp254, Asn256, Asp258, Arg260, Glu265, Asp290, Asp292, Asp294, Arg296, and Glu301. Positions 325-328 match the Prevents secretion from ER motif; it reads HDEL.

Belongs to the CREC family. As to quaternary structure, interacts with PCSK6 (immature form including the propeptide); probably involved in the maturation and the secretion of PCSK6. Post-translationally, N-glycosylated. Degraded by PCSK6 and other endoproteases including FURIN and PCSK5.

Its subcellular location is the endoplasmic reticulum lumen. In terms of biological role, probable molecular chaperone assisting protein biosynthesis and transport in the endoplasmic reticulum. Required for the proper biosynthesis and transport of pulmonary surfactant-associated protein A/SP-A, pulmonary surfactant-associated protein D/SP-D and the lipid transporter ABCA3. By regulating both the proper expression and the degradation through the endoplasmic reticulum-associated protein degradation pathway of these proteins plays a crucial role in pulmonary surfactant homeostasis. Has an anti-fibrotic activity by negatively regulating the secretion of type I and type III collagens. This calcium-binding protein also transiently associates with immature PCSK6 and regulates its secretion. This chain is Reticulocalbin-3, found in Rattus norvegicus (Rat).